The chain runs to 365 residues: D-alanine--D-alanine ligase (365 aa).

Residues 140-346 (KKILRRHGLQ…YSQLLTDLIY (207 aa)) enclose the ATP-grasp domain. Residue 173 to 228 (EKQLSYPIFVKPANLGSSVGISKVKNREELIQGIDLAVKYDMKCLAEEFIPGKEIE) participates in ATP binding. Mg(2+) contacts are provided by D299, E313, and N315.

It belongs to the D-alanine--D-alanine ligase family. Mg(2+) serves as cofactor. Mn(2+) is required as a cofactor.

The protein resides in the cytoplasm. The enzyme catalyses 2 D-alanine + ATP = D-alanyl-D-alanine + ADP + phosphate + H(+). It participates in cell wall biogenesis; peptidoglycan biosynthesis. In terms of biological role, cell wall formation. The chain is D-alanine--D-alanine ligase from Natranaerobius thermophilus (strain ATCC BAA-1301 / DSM 18059 / JW/NM-WN-LF).